The chain runs to 656 residues: L-type lectin-domain containing receptor kinase S.1 (656 aa).

A signal peptide spans 1–29 (MSWQWRRRQWPSPLLLILIVLHLVSSSSA). A legume-lectin like region spans residues 30-273 (IDFLYNSFSS…ARRILAWSLS (244 aa)). At 30–304 (IDFLYNSFSS…SSSLSTGAIA (275 aa)) the chain is on the extracellular side. Asparagine 42, asparagine 63, asparagine 121, asparagine 139, asparagine 191, asparagine 219, asparagine 282, and asparagine 293 each carry an N-linked (GlcNAc...) asparagine glycan. A helical transmembrane segment spans residues 305–325 (GIVIGCVVFVALIGFGGYLIW). At 326-656 (KKLMREEEEE…AAADSTAAHA (331 aa)) the chain is on the cytoplasmic side. A Protein kinase domain is found at 361–639 (FSNDRLLGSG…LLGSPQEDLL (279 aa)). Residues 367-375 (LGSGGFGKV) and lysine 389 each bind ATP. The active-site Proton acceptor is the aspartate 485.

It in the C-terminal section; belongs to the protein kinase superfamily. Ser/Thr protein kinase family. This sequence in the N-terminal section; belongs to the leguminous lectin family.

The protein resides in the cell membrane. It catalyses the reaction L-seryl-[protein] + ATP = O-phospho-L-seryl-[protein] + ADP + H(+). The enzyme catalyses L-threonyl-[protein] + ATP = O-phospho-L-threonyl-[protein] + ADP + H(+). In terms of biological role, involved in resistance response to the pathogenic oomycetes Phytophthora infestans and Phytophthora capsici and to the pathogenic bacteria Pseudomonas syringae. The protein is L-type lectin-domain containing receptor kinase S.1 of Arabidopsis thaliana (Mouse-ear cress).